A 1243-amino-acid chain; its full sequence is Zinc finger protein ZFAT (1243 aa).

The C2H2-type 1 zinc-finger motif lies at F12 to H35. Disordered regions lie at residues P51–L116 and G147–A189. Positions M70–T81 are enriched in basic residues. Residues L116–N141 form a C2H2-type 2; degenerate zinc finger. Residues E156–A189 are compositionally biased toward basic and acidic residues. 7 C2H2-type zinc fingers span residues F271–H293, Y299–H321, F326–H349, Q354–H377, Y404–H426, F432–H454, and Y458–H481. Zn(2+) is bound by residues C273, C276, H289, H293, C301, C304, H317, H321, C328, C331, H344, H349, C356, C359, H372, H377, C406, C409, H422, and H426. 4 residues coordinate Zn(2+): C460, C463, H476, and H481. Disordered regions lie at residues E534–T570, T603–Q625, and A638–A705. Positions A610–H620 are enriched in basic and acidic residues. The segment covering A638–A650 has biased composition (polar residues). C2H2-type zinc fingers lie at residues L742–H764, Y770–H793, L798–H822, Y830–H853, M880–H903, F909–H931, H937–H959, F966–H988, F994–H1017, and L1041–H1064. The Zn(2+) site is built by C772, C775, H788, H793, C800, C805, H818, H822, C832, C835, H848, H853, C882, C885, H899, H903, C911, C914, H927, H931, C939, C942, H955, and L958.

Isoform 1 is strongly expressed in placenta, spleen, kidney, testis and peripheral blood leukocytes. Expressed in CD4+ and CD8+ T-cells, CD19+ B-cells and CB14+ monocytes. Isoform 3 is strongly expressed in placenta, ovary, tonsil, CD19+ B-cells and CD14+ monocytes.

Its subcellular location is the nucleus. It localises to the cytoplasm. It is found in the cytosol. May be involved in transcriptional regulation. Overexpression causes down-regulation of a number of genes involved in the immune response. Some genes are also up-regulated. The chain is Zinc finger protein ZFAT (ZFAT) from Homo sapiens (Human).